Consider the following 240-residue polypeptide: Poxin (240 aa).

The active-site Proton donor is the His46. The Shared with catalytic histidine of dimeric partner role is filled by Tyr181. The Proton acceptor; shared with catalytic histidine of dimeric partner role is filled by Lys185.

The protein belongs to the poxin family. In terms of assembly, homodimer.

The enzyme catalyses 2',3'-cGAMP + H2O = Gp(2'-5')Ap(3') + H(+). In terms of biological role, nuclease that cleaves host 2',3'-cGAMP. In Bombyx mori (Silk moth), this protein is Poxin (p26).